A 215-amino-acid chain; its full sequence is MSEAKRLAAEKAIDYVEDGMIVGVGTGSTVAYFIDALGRIGHRIKGAVSSSEQSTARLRQHGIEVLDLNHTGNLSLYVDGADECDPNRCLIKGGGAALTREKIIAEASERFICIVDPSKQVPVLGKFPLPVEVIPMARSLVARQILALTGGQPVWRDGVVTDNGNVVLDVHHLQVTDPVGLERSLNQIPGVVCVGLFARRPADVVIVGGEPPQVI.

Substrate-binding positions include 26–29, 79–82, and 92–95; these read TGST, DGAD, and KGGG. E101 serves as the catalytic Proton acceptor. K119 contacts substrate.

Belongs to the ribose 5-phosphate isomerase family. In terms of assembly, homodimer.

It carries out the reaction aldehydo-D-ribose 5-phosphate = D-ribulose 5-phosphate. Its pathway is carbohydrate degradation; pentose phosphate pathway; D-ribose 5-phosphate from D-ribulose 5-phosphate (non-oxidative stage): step 1/1. In terms of biological role, catalyzes the reversible conversion of ribose-5-phosphate to ribulose 5-phosphate. The protein is Ribose-5-phosphate isomerase A of Xanthomonas axonopodis pv. citri (strain 306).